Consider the following 301-residue polypeptide: Probable 5-dehydro-4-deoxyglucarate dehydratase (301 aa).

The protein belongs to the DapA family.

It catalyses the reaction 5-dehydro-4-deoxy-D-glucarate + H(+) = 2,5-dioxopentanoate + CO2 + H2O. The protein operates within carbohydrate acid metabolism; D-glucarate degradation; 2,5-dioxopentanoate from D-glucarate: step 2/2. The sequence is that of Probable 5-dehydro-4-deoxyglucarate dehydratase from Cereibacter sphaeroides (strain ATCC 17023 / DSM 158 / JCM 6121 / CCUG 31486 / LMG 2827 / NBRC 12203 / NCIMB 8253 / ATH 2.4.1.) (Rhodobacter sphaeroides).